We begin with the raw amino-acid sequence, 58 residues long: MAGPEADAQFHFTGIKKYFNSYTLTGRMNCVLATYGSIALIVLYFKLRSKKTPAVKAT.

An N6-acetyllysine; partial mark is found at lysine 16 and lysine 17. A helical transmembrane segment spans residues 23–45 (TLTGRMNCVLATYGSIALIVLYF).

As to quaternary structure, component of the ATP synthase complex composed at least of ATP5F1A/subunit alpha, ATP5F1B/subunit beta, ATP5MC1/subunit c (homooctomer), MT-ATP6/subunit a, MT-ATP8/subunit 8, ATP5ME/subunit e, ATP5MF/subunit f, ATP5MG/subunit g, ATP5MK/subunit k, ATP5MJ/subunit j, ATP5F1C/subunit gamma, ATP5F1D/subunit delta, ATP5F1E/subunit epsilon, ATP5PF/subunit F6, ATP5PB/subunit b, ATP5PD/subunit d, ATP5PO/subunit OSCP. ATP synthase complex consists of a soluble F(1) head domain (subunits alpha(3) and beta(3)) - the catalytic core - and a membrane F(0) domain - the membrane proton channel (subunits c, a, 8, e, f, g, k and j). These two domains are linked by a central stalk (subunits gamma, delta, and epsilon) rotating inside the F1 region and a stationary peripheral stalk (subunits F6, b, d, and OSCP). The ATP synthase complex/complex V exists as a monomeric and a dimeric supercomplex that helps shape mitochondrial cristae to optimize proton flow.

It localises to the mitochondrion membrane. Subunit k, of the mitochondrial membrane ATP synthase complex (F(1)F(0) ATP synthase or Complex V) that produces ATP from ADP in the presence of a proton gradient across the membrane which is generated by electron transport complexes of the respiratory chain. ATP synthase complex consist of a soluble F(1) head domain - the catalytic core - and a membrane F(1) domain - the membrane proton channel. These two domains are linked by a central stalk rotating inside the F(1) region and a stationary peripheral stalk. During catalysis, ATP synthesis in the catalytic domain of F(1) is coupled via a rotary mechanism of the central stalk subunits to proton translocation. In vivo, can only synthesize ATP although its ATP hydrolase activity can be activated artificially in vitro. Part of the complex F(0) domain. Required for dimerization of the ATP synthase complex and as such regulates ATP synthesis in the mitochondria. The polypeptide is ATP synthase F(0) complex subunit k, mitochondrial (Bos taurus (Bovine)).